The primary structure comprises 281 residues: UPF0162 protein PD_0709 (281 aa).

TPR repeat units follow at residues 193–226 and 227–260; these read VRIL…VPNQ and PEAL…YPST.

The protein belongs to the UPF0162 family.

The protein is UPF0162 protein PD_0709 of Xylella fastidiosa (strain Temecula1 / ATCC 700964).